A 504-amino-acid chain; its full sequence is Alpha,alpha-trehalose-phosphate synthase [UDP-forming] (504 aa).

Residues Tyr97 and Asp151 each contribute to the D-glucose 6-phosphate site. The UDP site is built by Arg287 and Lys292. 2 residues coordinate UDP-alpha-D-glucose: Arg287 and Lys292. A D-glucose 6-phosphate-binding site is contributed by Arg325. 386-394 (DGMNLVSYE) is a binding site for UDP-alpha-D-glucose. 390 to 394 (LVSYE) serves as a coordination point for UDP. The disordered stretch occupies residues 482-504 (AGKLPTKETPVNGETSKLETSSQ). Polar residues predominate over residues 493–504 (NGETSKLETSSQ).

This sequence belongs to the glycosyltransferase 20 family.

It catalyses the reaction D-glucose 6-phosphate + UDP-alpha-D-glucose = alpha,alpha-trehalose 6-phosphate + UDP + H(+). It participates in carbohydrate biosynthesis. Functionally, synthase catalytic subunit of the trehalose synthase complex that catalyzes the production of trehalose from glucose-6-phosphate and UDP-alpha-D-glucose in a two step process. This Emericella nidulans (strain FGSC A4 / ATCC 38163 / CBS 112.46 / NRRL 194 / M139) (Aspergillus nidulans) protein is Alpha,alpha-trehalose-phosphate synthase [UDP-forming] (tpsA).